Reading from the N-terminus, the 137-residue chain is Probable disulfide formation protein C (137 aa).

The chain crosses the membrane as a helical span at residues 6-25; it reads ENLMLGSWLTALTAMLGSLY. A disulfide bond links Cys35 and Cys38. Transmembrane regions (helical) follow at residues 40–59 and 66–83; these read YQRI…YLKR and YSLW…YHYS. An intrachain disulfide couples Cys97 to Cys102. A helical transmembrane segment spans residues 111–133; the sequence is GFVTIPFLAFTAFVIIFICSLLI.

Belongs to the DsbB family. BdbC subfamily.

The protein resides in the cell membrane. Required for disulfide bond formation in some proteins. In Halalkalibacterium halodurans (strain ATCC BAA-125 / DSM 18197 / FERM 7344 / JCM 9153 / C-125) (Bacillus halodurans), this protein is Probable disulfide formation protein C.